The primary structure comprises 695 residues: Elongation factor G (695 aa).

The region spanning 10–285 is the tr-type G domain; it reads AKTRNIGIMA…AVIDYLPSPI (276 aa). GTP is bound by residues 19 to 26, 83 to 87, and 137 to 140; these read AHIDAGKT, DTPGH, and NKMD.

The protein belongs to the TRAFAC class translation factor GTPase superfamily. Classic translation factor GTPase family. EF-G/EF-2 subfamily.

Its subcellular location is the cytoplasm. Catalyzes the GTP-dependent ribosomal translocation step during translation elongation. During this step, the ribosome changes from the pre-translocational (PRE) to the post-translocational (POST) state as the newly formed A-site-bound peptidyl-tRNA and P-site-bound deacylated tRNA move to the P and E sites, respectively. Catalyzes the coordinated movement of the two tRNA molecules, the mRNA and conformational changes in the ribosome. The chain is Elongation factor G from Limosilactobacillus reuteri (strain DSM 20016) (Lactobacillus reuteri).